The chain runs to 594 residues: Probable translation initiation factor IF-2 (594 aa).

One can recognise a tr-type G domain in the interval Leu-11 to Glu-226. Residues Gly-20–Thr-27 are G1. Gly-20 to Thr-27 is a binding site for GTP. The segment at Ala-45–His-49 is G2. Positions Asp-81 to Gly-84 are G3. Residues Asp-81 to His-85 and Asn-135 to Asp-138 each bind GTP. A G4 region spans residues Asn-135–Asp-138. The segment at Ser-203 to Arg-205 is G5.

It belongs to the TRAFAC class translation factor GTPase superfamily. Classic translation factor GTPase family. IF-2 subfamily.

In terms of biological role, function in general translation initiation by promoting the binding of the formylmethionine-tRNA to ribosomes. Seems to function along with eIF-2. The protein is Probable translation initiation factor IF-2 of Methanocella arvoryzae (strain DSM 22066 / NBRC 105507 / MRE50).